The sequence spans 737 residues: Probable serine/threonine-protein kinase DDB_G0269628 (737 aa).

The 481-residue stretch at Tyr-8–Leu-488 folds into the Protein kinase domain. ATP contacts are provided by residues Leu-14–Ala-22 and Lys-36. Disordered regions lie at residues Asn-155–Ser-251 and Thr-278–Asn-298. The span at Thr-156 to Val-167 shows a compositional bias: polar residues. Over residues Asn-168–Pro-229 the composition is skewed to low complexity. The active-site Proton acceptor is Asp-349.

Belongs to the protein kinase superfamily. NEK Ser/Thr protein kinase family. NIMA subfamily.

It carries out the reaction L-seryl-[protein] + ATP = O-phospho-L-seryl-[protein] + ADP + H(+). It catalyses the reaction L-threonyl-[protein] + ATP = O-phospho-L-threonyl-[protein] + ADP + H(+). This Dictyostelium discoideum (Social amoeba) protein is Probable serine/threonine-protein kinase DDB_G0269628.